A 387-amino-acid chain; its full sequence is Succinate--CoA ligase [ADP-forming] subunit beta (387 aa).

Residues K46, 53–55 (GRG), E99, C102, and E107 contribute to the ATP site. Residues N196 and D210 each coordinate Mg(2+). Substrate is bound by residues N261 and 318-320 (GIV).

It belongs to the succinate/malate CoA ligase beta subunit family. As to quaternary structure, heterotetramer of two alpha and two beta subunits. It depends on Mg(2+) as a cofactor.

It catalyses the reaction succinate + ATP + CoA = succinyl-CoA + ADP + phosphate. The enzyme catalyses GTP + succinate + CoA = succinyl-CoA + GDP + phosphate. It participates in carbohydrate metabolism; tricarboxylic acid cycle; succinate from succinyl-CoA (ligase route): step 1/1. In terms of biological role, succinyl-CoA synthetase functions in the citric acid cycle (TCA), coupling the hydrolysis of succinyl-CoA to the synthesis of either ATP or GTP and thus represents the only step of substrate-level phosphorylation in the TCA. The beta subunit provides nucleotide specificity of the enzyme and binds the substrate succinate, while the binding sites for coenzyme A and phosphate are found in the alpha subunit. The polypeptide is Succinate--CoA ligase [ADP-forming] subunit beta (Campylobacter hominis (strain ATCC BAA-381 / DSM 21671 / CCUG 45161 / LMG 19568 / NCTC 13146 / CH001A)).